The chain runs to 211 residues: ATP-dependent Clp protease proteolytic subunit (211 aa).

Residue S106 is the Nucleophile of the active site. Residue H131 is part of the active site.

Belongs to the peptidase S14 family. As to quaternary structure, fourteen ClpP subunits assemble into 2 heptameric rings which stack back to back to give a disk-like structure with a central cavity, resembling the structure of eukaryotic proteasomes.

Its subcellular location is the cytoplasm. It carries out the reaction Hydrolysis of proteins to small peptides in the presence of ATP and magnesium. alpha-casein is the usual test substrate. In the absence of ATP, only oligopeptides shorter than five residues are hydrolyzed (such as succinyl-Leu-Tyr-|-NHMec, and Leu-Tyr-Leu-|-Tyr-Trp, in which cleavage of the -Tyr-|-Leu- and -Tyr-|-Trp bonds also occurs).. Functionally, cleaves peptides in various proteins in a process that requires ATP hydrolysis. Has a chymotrypsin-like activity. Plays a major role in the degradation of misfolded proteins. The sequence is that of ATP-dependent Clp protease proteolytic subunit from Nitrobacter hamburgensis (strain DSM 10229 / NCIMB 13809 / X14).